Here is a 1084-residue protein sequence, read N- to C-terminus: Histone deacetylase 4 (1084 aa).

The stretch at 67–177 (REQQLQQELL…STEVKMKLQE (111 aa)) forms a coiled coil. The interaction with MEF2A stretch occupies residues 118–313 (MLAMKHQQEL…NNSSGSVSAE (196 aa)). Residues 133–163 (KLERHRQEQELEKQHREQKLQQLKNKEKGKE) show a composition bias toward basic and acidic residues. Disordered regions lie at residues 133-166 (KLERHRQEQELEKQHREQKLQQLKNKEKGKESAV), 206-226 (TQHSSLDQSSPPQSGVSTSYN), and 240-315 (PLRK…AENG). At S210 the chain carries Phosphoserine. At S246 the chain carries Phosphoserine; by CaMK4 and SIK1. Basic and acidic residues predominate over residues 259–274 (KVAERRSSPLLRRKDG). Residues 290–312 (SACSSAPGSGPSSPNNSSGSVSA) show a composition bias toward low complexity. The short motif at 349 to 354 (PSLPNI) is the PxLPxI/L motif; mediates interaction with ANKRA2 and 14-3-3 proteins element. S350 is subject to Phosphoserine. S467 carries the post-translational modification Phosphoserine; by CaMK4 and SIK1. Disordered stretches follow at residues 509–531 (PKPSEPARQPESHPEETEEELRE), 548–585 (KEAHAQAGVQVKQEPIESDEEEAEPPREVEPGQRQPSE), and 626–646 (PLSRAQSSPASATFPVSVQEP). Positions 516–531 (RQPESHPEETEEELRE) are enriched in basic and acidic residues. A Glycyl lysine isopeptide (Lys-Gly) (interchain with G-Cter in SUMO) cross-link involves residue K559. S565 carries the post-translational modification Phosphoserine. Polar residues predominate over residues 629–641 (RAQSSPASATFPV). S632 bears the Phosphoserine; by CaMK4 mark. Position 633 is a phosphoserine (S633). The histone deacetylase stretch occupies residues 655–1084 (GLVYDTLMLK…EEPMEEEPPL (430 aa)). C667, C669, H675, and C751 together coordinate Zn(2+). Residue H803 is part of the active site. The Nuclear export signal motif lies at 1051–1084 (EEAETVTAMASLSVGVKPAEKRPDEEPMEEEPPL). A disordered region spans residues 1061-1084 (SLSVGVKPAEKRPDEEPMEEEPPL).

Belongs to the histone deacetylase family. HD type 2 subfamily. Homodimer. Homodimerization via its N-terminal domain. Interacts with MEF2A. Interacts with MEF2C and MEF2D. Interacts with AHRR. Interacts with NR2C1. Interacts with HDAC7. Interacts with a 14-3-3 chaperone proteins in a phosphorylation dependent manner. Interacts with 14-3-3 protein YWHAB. Interacts with BTBD14B. Interacts with KDM5B. Interacts with MYOCD. Interacts with MORC2. Interacts (via PxLPxI/L motif) with ANKRA2 (via ankyrin repeats). Interacts with CUL7 (as part of the 3M complex); negatively regulated by ANKRA2. Interacts with EP300 in the presence of TFAP2C. Interacts with HSPA1A and HSPA1B leading to their deacetylation at 'Lys-77'. Interacts with ZBTB7B; the interaction allows the recruitment of HDAC4 on CD8 loci for deacetylation and possible inhibition of CD8 genes expression. Interacts with DHX36. Interacts with SIK3; this interaction leads to HDAC4 retention in the cytoplasm. Interacts with ZNF638. Phosphorylated by CaMK4 at Ser-246, Ser-467 and Ser-632. Phosphorylation at other residues by CaMK2D is required for the interaction with 14-3-3. Phosphorylation at Ser-350, within the PxLPxI/L motif, impairs the binding of ANKRA2 but generates a high-affinity docking site for 14-3-3. Post-translationally, sumoylation on Lys-559 is promoted by the E3 SUMO-protein ligase RANBP2, and prevented by phosphorylation by CaMK4. In terms of tissue distribution, ubiquitous.

It localises to the nucleus. The protein localises to the cytoplasm. The enzyme catalyses N(6)-acetyl-L-lysyl-[histone] + H2O = L-lysyl-[histone] + acetate. Responsible for the deacetylation of lysine residues on the N-terminal part of the core histones (H2A, H2B, H3 and H4). Histone deacetylation gives a tag for epigenetic repression and plays an important role in transcriptional regulation, cell cycle progression and developmental events. Histone deacetylases act via the formation of large multiprotein complexes. Involved in muscle maturation via its interaction with the myocyte enhancer factors such as MEF2A, MEF2C and MEF2D. Involved in the MTA1-mediated epigenetic regulation of ESR1 expression in breast cancer. Deacetylates HSPA1A and HSPA1B at 'Lys-77' leading to their preferential binding to co-chaperone STUB1. This chain is Histone deacetylase 4, found in Homo sapiens (Human).